The following is a 652-amino-acid chain: ATP-binding cassette sub-family G member 5 (652 aa).

Residues 1 to 25 (MGELPFLSPEGARGPHINRGSLSSL) are disordered. Over 1–384 (MGELPFLSPE…RVTRNLMRNK (384 aa)) the chain is Cytoplasmic. The 256-residue stretch at 39 to 294 (LGVLHVSYSV…FNNCGYPCPE (256 aa)) folds into the ABC transporter domain. Residue C61 is the site of S-palmitoyl cysteine attachment. Position 87–94 (87–94 (GSSGSGKT)) interacts with ATP. A helical transmembrane segment spans residues 385–405 (QAVIMRLVQNLIMGLFLIFYL). Positions 389 to 646 (MRLVQNLIMG…ILGIVIFKVR (258 aa)) constitute an ABC transmembrane type-2 domain. The Extracellular segment spans residues 406-422 (LRVQNNTLKGAVQDRVG). The N-linked (GlcNAc...) asparagine glycan is linked to N410. A helical transmembrane segment spans residues 423–443 (LLYQLVGATPYTGMLNAVNLF). The Cytoplasmic segment spans residues 444–468 (PMLRAVSDQESQDGLYHKWQMLLAY). The chain crosses the membrane as a helical span at residues 469 to 490 (VLHVLPFSVIATVIFSSVCYWT). The Extracellular segment spans residues 491 to 501 (LGLYPEVARFG). A helical transmembrane segment spans residues 502–522 (YFSAALLAPHLIGEFLTLVLL). Over 523–529 (GIVQNPN) the chain is Cytoplasmic. Residues 530 to 550 (IVNSIVALLSISGLLIGSGFI) traverse the membrane as a helical segment. The Extracellular portion of the chain corresponds to 551–624 (RNIQEMPIPL…PGATSRFTAN (74 aa)). N-linked (GlcNAc...) asparagine glycans are attached at residues N585 and N592. Residues 625–645 (FLILYGFIPALVILGIVIFKV) traverse the membrane as a helical segment. Over 646-652 (RDYLISR) the chain is Cytoplasmic.

This sequence belongs to the ABC transporter superfamily. ABCG family. Eye pigment precursor importer (TC 3.A.1.204) subfamily. As to quaternary structure, heterodimer with ABCG8. Requires Mg(2+) as cofactor. In terms of processing, N-glycosylated. N-glycosylation is important for efficient export out of the endoplasmic reticulum. In terms of tissue distribution, detected in liver and jejunum. Detected on enterocyte villi (at protein level). Expressed in jejunum, ileum and, at lower level, in the liver.

The protein localises to the cell membrane. The protein resides in the apical cell membrane. It catalyses the reaction cholesterol(in) + ATP + H2O = cholesterol(out) + ADP + phosphate + H(+). It carries out the reaction sitosterol(in) + ATP + H2O = sitosterol(out) + ADP + phosphate + H(+). Its activity is regulated as follows. Cholesterol transport is inhibited by vanadate and by beryllium fluoride. ABCG5 and ABCG8 form an obligate heterodimer that mediates Mg(2+)- and ATP-dependent sterol transport across the cell membrane. Plays an essential role in the selective transport of dietary plant sterols and cholesterol in and out of the enterocytes and in the selective sterol excretion by the liver into bile. Required for normal sterol homeostasis. The heterodimer with ABCG8 has ATPase activity. The protein is ATP-binding cassette sub-family G member 5 of Mus musculus (Mouse).